The chain runs to 31 residues: Cyclotide mech-6 (31 aa).

The segment at residues Gly1 to Asn31 is a cross-link (cyclopeptide (Gly-Asn)). 3 disulfides stabilise this stretch: Cys5/Cys21, Cys9/Cys23, and Cys14/Cys28.

In terms of processing, this is a cyclic peptide. Contains 3 disulfide bonds.

Its function is as follows. Probably participates in a plant defense mechanism (Potential). Binds to and induces leakage in phospholipd membranes, particularly ones containing 1-palmitoyl-2-oleophosphatidylethanolamine (POPE). The protein is Cyclotide mech-6 of Melicytus chathamicus (Chatham Island mahoe).